Here is a 136-residue protein sequence, read N- to C-terminus: Histone H3.2 (136 aa).

Positions 1 to 43 (MARTKQTARKSTGGKAPRKQLATKAARKSAPATGGVKKPHRFR) are disordered. At K5 the chain carries N6-methylated lysine. K10 is modified (N6-acetyllysine; alternate). N6-methylated lysine; alternate is present on K10. S11 carries the phosphoserine modification. T12 is subject to Phosphothreonine. K15 is modified (N6-acetyllysine). An N6-acetyllysine; alternate mark is found at K19 and K24. An N6-methylated lysine; alternate mark is found at K19 and K24. K28 carries the post-translational modification N6-methylated lysine. S29 is subject to Phosphoserine. K37 bears the N6-methylated lysine mark.

The protein belongs to the histone H3 family. The nucleosome is a histone octamer containing two molecules each of H2A, H2B, H3 and H4 assembled in one H3-H4 heterotetramer and two H2A-H2B heterodimers. The octamer wraps approximately 147 bp of DNA. Acetylation is generally linked to gene activation. Can be acetylated to form H3K9ac, H3K14ac, H3K18ac and H3K23ac. H3K9ac could compete with H3K9me and prevent gene silencing. H3K9ac is restricted to euchromatin. Post-translationally, methylated to form mainly H3K4me, H3K9me, H3K18me, H3K23me, H3K27me and H3K36me. H3K4me1/2/3, H3K9me3, H3K27me3 and H3K36me1/2/3 are typical marks for euchromatin, whereas heterochromatic chromocenters are enriched in H3K9me1/2 and H3K27me1/2. H2BK143ub1 is probably prerequisite for H3K4me. In terms of processing, can be phosphorylated to form H3S10ph, H3T11ph and H3S28ph. Expressed in bicellular pollen, root tips, shoot apices, young leaves and ovules.

It localises to the nucleus. The protein localises to the nucleolus. It is found in the chromosome. Its function is as follows. Core component of nucleosome. Nucleosomes wrap and compact DNA into chromatin, limiting DNA accessibility to the cellular machineries which require DNA as a template. Histones thereby play a central role in transcription regulation, DNA repair, DNA replication and chromosomal stability. DNA accessibility is regulated via a complex set of post-translational modifications of histones, also called histone code, and nucleosome remodeling. In Lilium longiflorum (Trumpet lily), this protein is Histone H3.2 (YAH3).